A 125-amino-acid polypeptide reads, in one-letter code: Holo-[acyl-carrier-protein] synthase (125 aa).

Positions 8 and 55 each coordinate Mg(2+).

The protein belongs to the P-Pant transferase superfamily. AcpS family. It depends on Mg(2+) as a cofactor.

It localises to the cytoplasm. The enzyme catalyses apo-[ACP] + CoA = holo-[ACP] + adenosine 3',5'-bisphosphate + H(+). In terms of biological role, transfers the 4'-phosphopantetheine moiety from coenzyme A to a Ser of acyl-carrier-protein. The polypeptide is Holo-[acyl-carrier-protein] synthase (Treponema pallidum (strain Nichols)).